The following is a 354-amino-acid chain: Carbonic anhydrase 12 (354 aa).

The N-terminal stretch at 1–24 (MPRRSLHAAAVLLLVILKEQPSSP) is a signal peptide. Topologically, residues 25 to 301 (APVNGSKWTY…VQVCTAAGLS (277 aa)) are extracellular. 2 N-linked (GlcNAc...) asparagine glycosylation sites follow: asparagine 28 and asparagine 80. Residues 30 to 289 (SKWTYFGPDG…FDERLVYTSF (260 aa)) form the Alpha-carbonic anhydrase domain. A disulfide bridge links cysteine 50 with cysteine 230. Histidine 94 (proton donor/acceptor) is an active-site residue. Residues histidine 119, histidine 121, and histidine 145 each contribute to the Zn(2+) site. A glycan (N-linked (GlcNAc...) asparagine) is linked at asparagine 162. 226-227 (TT) is a substrate binding site. A helical transmembrane segment spans residues 302 to 322 (LGIILSLALAGILGICIVVVV). Topologically, residues 323-354 (SIWLFRRKSIKKGDNKGVIYKPATKMETEAHA) are cytoplasmic.

It belongs to the alpha-carbonic anhydrase family. In terms of assembly, homodimer. Zn(2+) serves as cofactor. As to expression, highly expressed in colon, kidney, prostate, intestine and activated lymphocytes. Expressed at much higher levels in the renal cell cancers than in surrounding normal kidney tissue. Moderately expressed in pancreas, ovary and testis. Expressed in sweat glands and bronchiolar epithelium.

It localises to the membrane. The protein resides in the cell membrane. The enzyme catalyses hydrogencarbonate + H(+) = CO2 + H2O. Its activity is regulated as follows. Inhibited by coumarins, saccharin, sulfonamide derivatives such as acetazolamide (AZA), benzenesulfonamide and derivatives (4-carboxyethylbenzene-sulfonamide, 4-carboxyethylbenzene-sulfonamide ethyl ester, 4-(acetyl-2-aminoethyl)benzene-sulfonamide, 4-aminoethylbenzene-sulfonamide) and Foscarnet (phosphonoformate trisodium salt). Reversible hydration of carbon dioxide. The chain is Carbonic anhydrase 12 from Homo sapiens (Human).